The primary structure comprises 278 residues: NAD kinase (278 aa).

D67 serves as the catalytic Proton acceptor. Residues 67-68 (DG), R72, 137-138 (NE), K148, R165, D167, 178-183 (TGYAMS), A202, and Q237 each bind NAD(+).

The protein belongs to the NAD kinase family. The cofactor is a divalent metal cation.

The protein resides in the cytoplasm. The catalysed reaction is NAD(+) + ATP = ADP + NADP(+) + H(+). Involved in the regulation of the intracellular balance of NAD and NADP, and is a key enzyme in the biosynthesis of NADP. Catalyzes specifically the phosphorylation on 2'-hydroxyl of the adenosine moiety of NAD to yield NADP. This chain is NAD kinase, found in Thermococcus kodakarensis (strain ATCC BAA-918 / JCM 12380 / KOD1) (Pyrococcus kodakaraensis (strain KOD1)).